We begin with the raw amino-acid sequence, 1384 residues long: ATP-dependent RNA helicase TDRD9 (1384 aa).

Residues 35–60 (EAPREEVQRSEEVPSEAPTAQAQDPV) form a disordered region. Positions 36 to 46 (APREEVQRSEE) are enriched in basic and acidic residues. In terms of domain architecture, Helicase ATP-binding spans 144–310 (ISLIESNSVV…FAVPVQNKMN (167 aa)). 157 to 164 (GATGSGKS) contributes to the ATP binding site. The short motif at 256 to 259 (DEVH) is the DEAH box element. Residues 379-546 (SGAQFVSERS…VLKVKLLDMG (168 aa)) enclose the Helicase C-terminal domain. Positions 946-1006 (HPHPDLVCLA…REIPCQLLEL (61 aa)) constitute a Tudor domain.

This sequence belongs to the DEAD box helicase family. DEAH subfamily. As to quaternary structure, interacts with piRNA-associated proteins PIWIL1 and PIWIL4.

It localises to the cytoplasm. Its subcellular location is the nucleus. It catalyses the reaction ATP + H2O = ADP + phosphate + H(+). In terms of biological role, ATP-binding RNA helicase which plays a central role during spermatogenesis by repressing transposable elements and preventing their mobilization, which is essential for the germline integrity. Acts via the piRNA metabolic process, which mediates the repression of transposable elements during meiosis by forming complexes composed of piRNAs and Piwi proteins and governs the methylation and subsequent repression of transposons. Acts downstream of piRNA biogenesis: exclusively required for transposon silencing in the nucleus, suggesting that it acts as a nuclear effector in the nucleus together with PIWIL4. In Rattus norvegicus (Rat), this protein is ATP-dependent RNA helicase TDRD9.